The primary structure comprises 822 residues: Protein smoothened (822 aa).

An N-terminal signal peptide occupies residues 1–28 (MSSKRPCSIVGSFWMLWIWTATSMVARA). At 29–212 (VILHPNETIF…EDEHSDMHSY (184 aa)) the chain is on the extracellular side. A glycan (N-linked (GlcNAc...) asparagine) is linked at asparagine 34. 5 cysteine pairs are disulfide-bonded: cysteine 42-cysteine 157, cysteine 48-cysteine 112, cysteine 56-cysteine 105, cysteine 96-cysteine 132, and cysteine 125-cysteine 147. The region spanning 43–160 (KKSTTCEVLK…EQFPKGCQNE (118 aa)) is the FZ domain. Aspartate 73 contacts cholesterol. Residue asparagine 167 is glycosylated (N-linked (GlcNAc...) asparagine). Cystine bridges form between cysteine 172/cysteine 192, cysteine 196/cysteine 274, and cysteine 293/cysteine 369. Residues 213-233 (IAVFGTITLLCTFFTLATFLA) traverse the membrane as a helical segment. At 234-241 (DWKNSNRY) the chain is on the cytoplasmic side. The helical transmembrane segment at 242–262 (PAVILFYVNACFFIGSIGWLA) threads the bilayer. Residues 263-293 (QFMDGARNEIVCKSDNTMRLGEPSSTETLSC) lie on the Extracellular side of the membrane. A helical membrane pass occupies residues 294-314 (VIIFVIVYYSLMSGVIWFVML). Residues 315–335 (TYAWHTSFKALGTTHQPLSGK) lie on the Cytoplasmic side of the membrane. The chain crosses the membrane as a helical span at residues 336 to 356 (TSYFHLVTWSIPFILTVAILA). At 357 to 381 (NSQVDADSVSGICFVGYRYYEYRAG) the chain is on the extracellular side. A cholesterol-binding site is contributed by tyrosine 373. The helical transmembrane segment at 382 to 402 (FVLAPIGFVLVIGGYFLIRGV) threads the bilayer. Residues 403-430 (MTLFSIKSNHPGLLSEKAASKINETMLR) lie on the Cytoplasmic side of the membrane. A helical transmembrane segment spans residues 431-451 (LGIFGFLAFGFVLITFGCHFY). Residues 452–503 (DFFNQAEWERSFREYVLCEANVTIAHQTNKPIPECAIKNRPSLLVGKINLFS) are Extracellular-facing. A disulfide bridge links cysteine 469 with cysteine 486. Asparagine 472 carries N-linked (GlcNAc...) asparagine glycosylation. The helical transmembrane segment at 504–524 (MFGTGIAMSTWVWTKATILIW) threads the bilayer. Residues 525 to 822 (KRTWFRIIGR…AELLDADSDF (298 aa)) lie on the Cytoplasmic side of the membrane. The disordered stretch occupies residues 645–687 (MMKRKKKKKKRRKEVRPAGPAADEGNPAYHRREFGPSAVPRLP). Over residues 647–658 (KRKKKKKKRRKE) the composition is skewed to basic residues.

Belongs to the G-protein coupled receptor Fz/Smo family. As to quaternary structure, monomer.

The protein localises to the cell membrane. The protein resides in the cell projection. It is found in the cilium. Functionally, g protein-coupled receptor which associates with the patched protein (ptch) to transduce Hedgehog protein signaling. Binding of sonic hedgehog (shh) to its receptor patched prevents inhibition of smoothened (smo) by patched. When active, smo binds to and sequesters protein kinase A catalytic subunit prkaca at the cell membrane, preventing prkaca-mediated phosphorylation of gli transcription factors which releases the gli proteins from prkaca-mediated inhibition and allows for transcriptional activation of Hedgehog signaling pathway target genes. Required for the development of primary and secondary motoneurons but not for the specification of midbrain dopaminergic neurons or development of the medial floor plate. Required for induction of lateral floor plate and posterior motoneurons, anterior neural plate patterning, dorsoventral forebrain patterning, dorsoventral retinal patterning, optic stalk development, and formation of the forebrain primary axonal scaffold. Required to regulate the formation of a subset of cerebellar neurons by limiting wnt1 expression which controls cerebellar expression of transcription factor olig2. Required for development of the pancreas. Required for muscle development. Required for the formation of a single continuous intestinal lumen from multiple discontinuous lumens, probably by regulating remodeling through rab11a-mediated trafficking to facilitate lumen fusion. Required for development of the adenohypophysis. Required for anteroposterior patterning of the otic vesicle. Required for development of the anterior craniofacial skeleton. Required for patterning of the caudal fin. Required during gastrulation and early somitogenesis stages to promote cardiomyocyte formation by regulating the specification of myocardial progenitors. Required for induction of arterial endothelial cell formation by repressing venous cell fate. This chain is Protein smoothened, found in Danio rerio (Zebrafish).